A 455-amino-acid chain; its full sequence is MGAMAQNPPNLRPDLAPRLVIDSPRREGQPTIGMVSLGCPKALVDSERILTRLRAEGYAISPDYAGADAVIVNTCGFLDSAKVESLEAIGEALRENGRVIVTGCLGAEPDYITGAHPKVLAVTGPHQYEQVLDAVHGAVPPAPDPFVDLLPATGVRLTPRHFSYLKISEGCNHTCRFCIIPDMRGRLASRPERAVLREAEKLVEAGVRELLVISQDTSAYGTDWKGPEKFPILPLARELGRLGAWVRLHYVYPYPHVRELIPLMAEGLVLPYLDIPFQHAHPEVLKRMARPAAAARTLDEIAAWRRDCPEIALRSTFIVGYPGETEAEFQTLLDWLDEAQLDRVGCFQYENVAGARSNALPDHVAPEVKQERWDRFMEKAQAISEVKLAAKVGRRIEVIVDEVDEDGATCRTKADAPEIDGNLFIDEGFRGLAPGDILTVEVEEAGEYDIWGRPV.

An MTTase N-terminal domain is found at 30–140; that stretch reads PTIGMVSLGC…VLDAVHGAVP (111 aa). 6 residues coordinate [4Fe-4S] cluster: C39, C75, C104, C171, C175, and C178. The Radical SAM core domain occupies 157–386; sequence LTPRHFSYLK…MEKAQAISEV (230 aa). A TRAM domain is found at 389–455; it reads AAKVGRRIEV…GEYDIWGRPV (67 aa).

Belongs to the methylthiotransferase family. RimO subfamily. Requires [4Fe-4S] cluster as cofactor.

The protein localises to the cytoplasm. It catalyses the reaction L-aspartate(89)-[ribosomal protein uS12]-hydrogen + (sulfur carrier)-SH + AH2 + 2 S-adenosyl-L-methionine = 3-methylsulfanyl-L-aspartate(89)-[ribosomal protein uS12]-hydrogen + (sulfur carrier)-H + 5'-deoxyadenosine + L-methionine + A + S-adenosyl-L-homocysteine + 2 H(+). Catalyzes the methylthiolation of an aspartic acid residue of ribosomal protein uS12. The protein is Ribosomal protein uS12 methylthiotransferase RimO of Cereibacter sphaeroides (strain ATCC 17023 / DSM 158 / JCM 6121 / CCUG 31486 / LMG 2827 / NBRC 12203 / NCIMB 8253 / ATH 2.4.1.) (Rhodobacter sphaeroides).